The chain runs to 221 residues: PKHD-type hydroxylase P9303_20491 (221 aa).

The Fe2OG dioxygenase domain occupies 80–174 (HIHGVMFSRS…RLVCVGWIQS (95 aa)). Residues His-98, Asp-100, and His-155 each coordinate Fe cation. Arg-165 contributes to the 2-oxoglutarate binding site.

Requires Fe(2+) as cofactor. The cofactor is L-ascorbate.

In Prochlorococcus marinus (strain MIT 9303), this protein is PKHD-type hydroxylase P9303_20491.